Consider the following 295-residue polypeptide: UDP-N-acetylenolpyruvoylglucosamine reductase (295 aa).

The region spanning 23–188 (KVGGPADFLA…ISAKFALKPG (166 aa)) is the FAD-binding PCMH-type domain. The active site involves Arg-167. Catalysis depends on Ser-217, which acts as the Proton donor. Glu-287 is a catalytic residue.

This sequence belongs to the MurB family. It depends on FAD as a cofactor.

The protein resides in the cytoplasm. The catalysed reaction is UDP-N-acetyl-alpha-D-muramate + NADP(+) = UDP-N-acetyl-3-O-(1-carboxyvinyl)-alpha-D-glucosamine + NADPH + H(+). It functions in the pathway cell wall biogenesis; peptidoglycan biosynthesis. Its function is as follows. Cell wall formation. The chain is UDP-N-acetylenolpyruvoylglucosamine reductase from Streptococcus pyogenes serotype M28 (strain MGAS6180).